A 186-amino-acid polypeptide reads, in one-letter code: Ribosome-recycling factor (186 aa).

The protein belongs to the RRF family.

The protein localises to the cytoplasm. Responsible for the release of ribosomes from messenger RNA at the termination of protein biosynthesis. May increase the efficiency of translation by recycling ribosomes from one round of translation to another. In Burkholderia cenocepacia (strain HI2424), this protein is Ribosome-recycling factor.